The following is a 524-amino-acid chain: Serine/threonine-protein kinase PAK 2 (524 aa).

Positions 1-81 (MSDNGELEDK…PEISPPSDFE (81 aa)) are disordered. Residue S2 is modified to N-acetylserine. A phosphoserine mark is found at S2, S20, S55, S58, and S59. T60 is subject to Phosphothreonine. K62 bears the N6-acetyllysine mark. Phosphoserine is present on S64. Residues 67 to 81 (KEKERPEISPPSDFE) are compositionally biased toward basic and acidic residues. The tract at residues 69 to 112 (KERPEISPPSDFEHTIHVGFDAVTGEFTGMPEQWARLLQTSNIT) is GTPase-binding. Residues 69-137 (KERPEISPPS…KFYDSNTVKQ (69 aa)) are autoregulatory region. The 14-residue stretch at 74–87 (ISPPSDFEHTIHVG) folds into the CRIB domain. The linker stretch occupies residues 88-248 (FDAVTGEFTG…IVSIGDPKKK (161 aa)). N6-acetyllysine is present on K128. A Phosphothreonine modification is found at T134. At Y139 the chain carries Phosphotyrosine. At S141 the chain carries Phosphoserine. The interval 142 to 190 (FTPPEKDGFPSGTPALNTKGSETSAVVTEEDDDDEDAAPPVIAPRPDHT) is disordered. Position 143 is a phosphothreonine (T143). S152 carries the post-translational modification Phosphoserine. Phosphothreonine occurs at positions 154, 159, and 169. Residues 155–167 (PALNTKGSETSAV) show a composition bias toward polar residues. The span at 169–178 (TEEDDDDEDA) shows a compositional bias: acidic residues. S197 carries the phosphoserine modification. Residues 204–228 (APVGDSNVDSGAKSSDKQKKKAKMT) form a disordered region. Positions 245–251 (PKKKYTR) match the Nuclear localization signal motif. One can recognise a Protein kinase domain in the interval 249 to 500 (YTRYEKIGQG…AKELLQHPFL (252 aa)). ATP contacts are provided by residues 255-263 (IGQGASGTV) and K278. D368 functions as the Proton acceptor in the catalytic mechanism. T402 carries the phosphothreonine; by autocatalysis modification.

The protein belongs to the protein kinase superfamily. STE Ser/Thr protein kinase family. STE20 subfamily. As to quaternary structure, interacts tightly with GTP-bound but not GDP-bound CDC42/p21 and RAC1. Interacts with SH3MD4. Interacts with SCRIB. Interacts with ARHGEF7 and GIT1. PAK-2p34 interacts with ARHGAP10. Interacts with RAC1. Post-translationally, full-length PAK2 is autophosphorylated when activated by CDC42/p21. Following cleavage, both peptides, PAK-2p27 and PAK-2p34, become highly autophosphorylated. Autophosphorylation of PAK-2p27 can occur in the absence of any effectors and is dependent on phosphorylation of Thr-402, because PAK-2p27 is acting as an exogenous substrate. During apoptosis proteolytically cleaved by caspase-3 or caspase-3-like proteases to yield active PAK-2p34. In terms of processing, ubiquitinated, leading to its proteasomal degradation.

Its subcellular location is the cytoplasm. The protein resides in the nucleus. The protein localises to the perinuclear region. It is found in the membrane. The enzyme catalyses L-seryl-[protein] + ATP = O-phospho-L-seryl-[protein] + ADP + H(+). The catalysed reaction is L-threonyl-[protein] + ATP = O-phospho-L-threonyl-[protein] + ADP + H(+). Activated by binding small G proteins. Binding of GTP-bound CDC42 or RAC1 to the autoregulatory region releases monomers from the autoinhibited dimer, enables phosphorylation of Thr-402 and allows the kinase domain to adopt an active structure. Following caspase cleavage, autophosphorylated PAK-2p34 is constitutively active. Functionally, serine/threonine protein kinase that plays a role in a variety of different signaling pathways including cytoskeleton regulation, cell motility, cell cycle progression, apoptosis or proliferation. Acts as a downstream effector of the small GTPases CDC42 and RAC1. Activation by the binding of active CDC42 and RAC1 results in a conformational change and a subsequent autophosphorylation on several serine and/or threonine residues. Full-length PAK2 stimulates cell survival and cell growth. Phosphorylates MAPK4 and MAPK6 and activates the downstream target MAPKAPK5, a regulator of F-actin polymerization and cell migration. Phosphorylates JUN and plays an important role in EGF-induced cell proliferation. Phosphorylates many other substrates including histone H4 to promote assembly of H3.3 and H4 into nucleosomes, BAD, ribosomal protein S6, or MBP. Phosphorylates CASP7, thereby preventing its activity. Additionally, associates with ARHGEF7 and GIT1 to perform kinase-independent functions such as spindle orientation control during mitosis. On the other hand, apoptotic stimuli such as DNA damage lead to caspase-mediated cleavage of PAK2, generating PAK-2p34, an active p34 fragment that translocates to the nucleus and promotes cellular apoptosis involving the JNK signaling pathway. Caspase-activated PAK2 phosphorylates MKNK1 and reduces cellular translation. The sequence is that of Serine/threonine-protein kinase PAK 2 (Pak2) from Rattus norvegicus (Rat).